A 156-amino-acid chain; its full sequence is ATP synthase subunit b (156 aa).

The chain crosses the membrane as a helical span at residues 13–33 (AFIIFVWCCMKFVWPPLMAAI).

Belongs to the ATPase B chain family. As to quaternary structure, F-type ATPases have 2 components, F(1) - the catalytic core - and F(0) - the membrane proton channel. F(1) has five subunits: alpha(3), beta(3), gamma(1), delta(1), epsilon(1). F(0) has three main subunits: a(1), b(2) and c(10-14). The alpha and beta chains form an alternating ring which encloses part of the gamma chain. F(1) is attached to F(0) by a central stalk formed by the gamma and epsilon chains, while a peripheral stalk is formed by the delta and b chains.

It localises to the cell inner membrane. F(1)F(0) ATP synthase produces ATP from ADP in the presence of a proton or sodium gradient. F-type ATPases consist of two structural domains, F(1) containing the extramembraneous catalytic core and F(0) containing the membrane proton channel, linked together by a central stalk and a peripheral stalk. During catalysis, ATP synthesis in the catalytic domain of F(1) is coupled via a rotary mechanism of the central stalk subunits to proton translocation. Functionally, component of the F(0) channel, it forms part of the peripheral stalk, linking F(1) to F(0). The polypeptide is ATP synthase subunit b (Aeromonas salmonicida (strain A449)).